A 387-amino-acid polypeptide reads, in one-letter code: Alanine racemase (387 aa).

The active-site Proton acceptor; specific for D-alanine is K48. Residue K48 is modified to N6-(pyridoxal phosphate)lysine. R146 contributes to the substrate binding site. Catalysis depends on Y267, which acts as the Proton acceptor; specific for L-alanine. M315 contacts substrate.

This sequence belongs to the alanine racemase family. Pyridoxal 5'-phosphate serves as cofactor.

The enzyme catalyses L-alanine = D-alanine. It participates in amino-acid biosynthesis; D-alanine biosynthesis; D-alanine from L-alanine: step 1/1. Its function is as follows. Catalyzes the interconversion of L-alanine and D-alanine. May also act on other amino acids. The polypeptide is Alanine racemase (alr) (Methylacidiphilum infernorum (isolate V4) (Methylokorus infernorum (strain V4))).